Here is a 386-residue protein sequence, read N- to C-terminus: Formate-dependent phosphoribosylglycinamide formyltransferase (386 aa).

N(1)-(5-phospho-beta-D-ribosyl)glycinamide contacts are provided by residues 15–16 and E75; that span reads EL. ATP is bound by residues R107, K148, 153–158, 188–191, and E196; these read SSGKGQ and EQFI. Positions 112–301 constitute an ATP-grasp domain; sequence ALAAQQLNLQ…EFELHLRAIV (190 aa). The Mg(2+) site is built by E260 and E272. N(1)-(5-phospho-beta-D-ribosyl)glycinamide-binding positions include D279, K349, and 356 to 357; that span reads RR.

This sequence belongs to the PurK/PurT family. In terms of assembly, homodimer.

The catalysed reaction is N(1)-(5-phospho-beta-D-ribosyl)glycinamide + formate + ATP = N(2)-formyl-N(1)-(5-phospho-beta-D-ribosyl)glycinamide + ADP + phosphate + H(+). It participates in purine metabolism; IMP biosynthesis via de novo pathway; N(2)-formyl-N(1)-(5-phospho-D-ribosyl)glycinamide from N(1)-(5-phospho-D-ribosyl)glycinamide (formate route): step 1/1. Involved in the de novo purine biosynthesis. Catalyzes the transfer of formate to 5-phospho-ribosyl-glycinamide (GAR), producing 5-phospho-ribosyl-N-formylglycinamide (FGAR). Formate is provided by PurU via hydrolysis of 10-formyl-tetrahydrofolate. The polypeptide is Formate-dependent phosphoribosylglycinamide formyltransferase (Francisella tularensis subsp. novicida (strain U112)).